A 481-amino-acid polypeptide reads, in one-letter code: Adenosylhomocysteinase (481 aa).

Residues threonine 65, aspartate 140, and glutamate 200 each contribute to the substrate site. 201–203 (TTT) contacts NAD(+). Lysine 230 and aspartate 234 together coordinate substrate. Residues asparagine 235, 264–269 (GYGDVG), glutamate 287, asparagine 322, 343–345 (IGH), and asparagine 393 each bind NAD(+).

It belongs to the adenosylhomocysteinase family. The cofactor is NAD(+).

The protein resides in the cytoplasm. It carries out the reaction S-adenosyl-L-homocysteine + H2O = L-homocysteine + adenosine. Its pathway is amino-acid biosynthesis; L-homocysteine biosynthesis; L-homocysteine from S-adenosyl-L-homocysteine: step 1/1. May play a key role in the regulation of the intracellular concentration of adenosylhomocysteine. This is Adenosylhomocysteinase from Polynucleobacter necessarius subsp. necessarius (strain STIR1).